We begin with the raw amino-acid sequence, 149 residues long: Chromophore lyase CpcS/CpeS homolog (149 aa).

It belongs to the CpcS/CpeS biliprotein lyase family.

The protein resides in the plastid. It is found in the chloroplast. Its function is as follows. Might function to covalently attach a chromophore to Cys residue(s) of phycobiliproteins. This chain is Chromophore lyase CpcS/CpeS homolog, found in Pyropia yezoensis (Susabi-nori).